The chain runs to 258 residues: Imidazole glycerol phosphate synthase subunit HisF (258 aa).

Residues Asp-11 and Asp-130 contribute to the active site.

Belongs to the HisA/HisF family. Heterodimer of HisH and HisF.

Its subcellular location is the cytoplasm. The catalysed reaction is 5-[(5-phospho-1-deoxy-D-ribulos-1-ylimino)methylamino]-1-(5-phospho-beta-D-ribosyl)imidazole-4-carboxamide + L-glutamine = D-erythro-1-(imidazol-4-yl)glycerol 3-phosphate + 5-amino-1-(5-phospho-beta-D-ribosyl)imidazole-4-carboxamide + L-glutamate + H(+). Its pathway is amino-acid biosynthesis; L-histidine biosynthesis; L-histidine from 5-phospho-alpha-D-ribose 1-diphosphate: step 5/9. In terms of biological role, IGPS catalyzes the conversion of PRFAR and glutamine to IGP, AICAR and glutamate. The HisF subunit catalyzes the cyclization activity that produces IGP and AICAR from PRFAR using the ammonia provided by the HisH subunit. This Shigella boydii serotype 18 (strain CDC 3083-94 / BS512) protein is Imidazole glycerol phosphate synthase subunit HisF.